A 224-amino-acid chain; its full sequence is Peptidyl-prolyl cis-trans isomerase FKBP3 (224 aa).

N-acetylalanine is present on alanine 2. Serine 36 bears the Phosphoserine mark. Residues 89-102 are compositionally biased toward basic and acidic residues; that stretch reads KLNEDKPKETKSEE. The disordered stretch occupies residues 89–111; sequence KLNEDKPKETKSEETLDEGPPKY. Position 99 is an N6-acetyllysine (lysine 99). The PPIase FKBP-type domain maps to 128-224; sequence GDVVHCWYTG…TFEVELVDID (97 aa). Serine 152 carries the post-translational modification Phosphoserine. An N6-acetyllysine modification is found at lysine 170.

It belongs to the FKBP-type PPIase family.

The protein localises to the nucleus. The catalysed reaction is [protein]-peptidylproline (omega=180) = [protein]-peptidylproline (omega=0). Inhibited preferentially by rapamycin over FK506. Its function is as follows. FK506- and rapamycin-binding proteins (FKBPs) constitute a family of receptors for the two immunosuppressants which inhibit T-cell proliferation by arresting two distinct cytoplasmic signal transmission pathways. PPIases accelerate the folding of proteins. The polypeptide is Peptidyl-prolyl cis-trans isomerase FKBP3 (FKBP3) (Homo sapiens (Human)).